Here is a 214-residue protein sequence, read N- to C-terminus: Putative nickel/cobalt efflux system MJ1092 (214 aa).

Transmembrane regions (helical) follow at residues 2 to 22 (VMIM…LHAL), 46 to 66 (ILLG…LGIL), 79 to 99 (VHDM…IWII), 116 to 136 (VITL…AVLL), 149 to 169 (IYVA…AVAF), and 188 to 208 (LPLI…AHPI).

This sequence belongs to the NiCoT transporter (TC 2.A.52) family.

The protein localises to the cell membrane. Functionally, efflux system for nickel and cobalt. The sequence is that of Putative nickel/cobalt efflux system MJ1092 from Methanocaldococcus jannaschii (strain ATCC 43067 / DSM 2661 / JAL-1 / JCM 10045 / NBRC 100440) (Methanococcus jannaschii).